The sequence spans 101 residues: Large ribosomal subunit protein uL23 (101 aa).

Belongs to the universal ribosomal protein uL23 family. Part of the 50S ribosomal subunit. Contacts protein L29, and trigger factor when it is bound to the ribosome.

Its function is as follows. One of the early assembly proteins it binds 23S rRNA. One of the proteins that surrounds the polypeptide exit tunnel on the outside of the ribosome. Forms the main docking site for trigger factor binding to the ribosome. This is Large ribosomal subunit protein uL23 from Synechocystis sp. (strain ATCC 27184 / PCC 6803 / Kazusa).